The sequence spans 213 residues: Pyridoxine/pyridoxamine 5'-phosphate oxidase (213 aa).

Residues 60-65 (RMVLMK), 75-76 (YS), Lys82, and Gln104 each bind FMN. Lys65 serves as a coordination point for substrate. 3 residues coordinate substrate: Tyr122, Arg126, and Ser130. Residues 139–140 (QS) and Trp184 each bind FMN. 190 to 192 (RLH) is a substrate binding site. Arg194 serves as a coordination point for FMN.

This sequence belongs to the pyridoxamine 5'-phosphate oxidase family. Homodimer. The cofactor is FMN.

The catalysed reaction is pyridoxamine 5'-phosphate + O2 + H2O = pyridoxal 5'-phosphate + H2O2 + NH4(+). It catalyses the reaction pyridoxine 5'-phosphate + O2 = pyridoxal 5'-phosphate + H2O2. It participates in cofactor metabolism; pyridoxal 5'-phosphate salvage; pyridoxal 5'-phosphate from pyridoxamine 5'-phosphate: step 1/1. It functions in the pathway cofactor metabolism; pyridoxal 5'-phosphate salvage; pyridoxal 5'-phosphate from pyridoxine 5'-phosphate: step 1/1. In terms of biological role, catalyzes the oxidation of either pyridoxine 5'-phosphate (PNP) or pyridoxamine 5'-phosphate (PMP) into pyridoxal 5'-phosphate (PLP). The polypeptide is Pyridoxine/pyridoxamine 5'-phosphate oxidase (Rhodopseudomonas palustris (strain BisB18)).